The chain runs to 535 residues: Heat shock factor protein 2 (535 aa).

Glycyl lysine isopeptide (Lys-Gly) (interchain with G-Cter in SUMO2) cross-links involve residues Lys-2, Lys-82, Lys-135, Lys-139, Lys-151, Lys-210, Lys-218, and Lys-237. Residues 7–112 (VPAFLSKLWT…LLENIKRKVS (106 aa)) mediate DNA binding. The segment at 119 to 192 (NKIRQEDLTK…VTLVQNNQLV (74 aa)) is hydrophobic repeat HR-A/B. The tract at residues 298–325 (QSGEQSEPAREPLRVGSAGSSSPLMSSA) is disordered. Positions 313-325 (GSAGSSSPLMSSA) are enriched in low complexity. Residues 359–384 (LLDYLDSIDCSLEDFQAMLSGRQFSI) form a hydrophobic repeat HR-C region. Residues 418 to 437 (TKSSVVQHVSEEGRKSKSKP) form a disordered region. The segment covering 426–437 (VSEEGRKSKSKP) has biased composition (basic and acidic residues).

Belongs to the HSF family. As to quaternary structure, DNA-binding homotrimer in stressed or heat shocked cells, otherwise found as a homodimer. As to expression, isoform alpha is expressed predominantly in testis while isoform beta is expressed predominantly in heart and brain.

The protein resides in the cytoplasm. It is found in the nucleus. Functionally, DNA-binding protein that specifically binds heat shock promoter elements (HSE) and activates transcription. In higher eukaryotes, HSF is unable to bind to the HSE unless the cells are heat shocked. HSF2 is expressed in a form that binds DNA constitutively but loses DNA binding by incubation at greater than 41 degrees C. The polypeptide is Heat shock factor protein 2 (Hsf2) (Mus musculus (Mouse)).